The following is a 426-amino-acid chain: Histidine--tRNA ligase (426 aa).

It belongs to the class-II aminoacyl-tRNA synthetase family. In terms of assembly, homodimer.

Its subcellular location is the cytoplasm. The enzyme catalyses tRNA(His) + L-histidine + ATP = L-histidyl-tRNA(His) + AMP + diphosphate + H(+). This chain is Histidine--tRNA ligase, found in Malacoplasma penetrans (strain HF-2) (Mycoplasma penetrans).